A 106-amino-acid chain; its full sequence is uncharacterized protein (106 aa).

A helical membrane pass occupies residues 85-101; sequence AVALVLLCVSHHLTYLP.

It is found in the membrane. This is an uncharacterized protein from Saccharomyces cerevisiae (strain ATCC 204508 / S288c) (Baker's yeast).